A 394-amino-acid chain; its full sequence is Peroxisomal membrane protein PEX25 (394 aa).

Residues 1 to 25 (MSQFGTTDIVSGSETPPYSGASYQD) show a composition bias toward polar residues. The segment at 1–65 (MSQFGTTDIV…SRSDDEDSQA (65 aa)) is disordered. Residues 1–366 (MSQFGTTDIV…LNLKTPKGTY (366 aa)) are Cytoplasmic-facing. A compositionally biased stretch (basic and acidic residues) spans 51–65 (SHTESSRSDDEDSQA). Ser-58, Ser-63, and Ser-289 each carry phosphoserine. A helical transmembrane segment spans residues 367 to 383 (AVLSLGSGLTGLVKLWI). Residues 384-394 (TTKRSLCSSKD) lie on the Lumenal side of the membrane.

As to quaternary structure, homooligomer. Interacts with PEX27 and PEX34.

The protein resides in the peroxisome membrane. Its function is as follows. Required for regulation of peroxisome size and maintenance. Has a role in the import of peroxisomal matrix proteins. Imports RHO1 into the peroxisome. Also promotes peroxisome division and biogenesis. This chain is Peroxisomal membrane protein PEX25 (PEX25), found in Saccharomyces cerevisiae (strain ATCC 204508 / S288c) (Baker's yeast).